The chain runs to 483 residues: Glutamyl-tRNA(Gln) amidotransferase subunit A (483 aa).

Residues K76 and S151 each act as charge relay system in the active site. The active-site Acyl-ester intermediate is the S175.

Belongs to the amidase family. GatA subfamily. As to quaternary structure, heterotrimer of A, B and C subunits.

The enzyme catalyses L-glutamyl-tRNA(Gln) + L-glutamine + ATP + H2O = L-glutaminyl-tRNA(Gln) + L-glutamate + ADP + phosphate + H(+). Functionally, allows the formation of correctly charged Gln-tRNA(Gln) through the transamidation of misacylated Glu-tRNA(Gln) in organisms which lack glutaminyl-tRNA synthetase. The reaction takes place in the presence of glutamine and ATP through an activated gamma-phospho-Glu-tRNA(Gln). The sequence is that of Glutamyl-tRNA(Gln) amidotransferase subunit A from Chromobacterium violaceum (strain ATCC 12472 / DSM 30191 / JCM 1249 / CCUG 213 / NBRC 12614 / NCIMB 9131 / NCTC 9757 / MK).